A 271-amino-acid polypeptide reads, in one-letter code: Isoprenyl transferase (271 aa).

Asp-35 is a catalytic residue. Asp-35 serves as a coordination point for Mg(2+). Substrate-binding positions include 36-39 (GNGR), Trp-40, Arg-48, His-52, and 80-82 (STE). The Proton acceptor role is filled by Asn-83. Substrate-binding positions include Trp-84, Arg-86, Arg-207, and 213–215 (RIS). Glu-226 serves as a coordination point for Mg(2+).

Belongs to the UPP synthase family. As to quaternary structure, homodimer. The cofactor is Mg(2+).

Catalyzes the condensation of isopentenyl diphosphate (IPP) with allylic pyrophosphates generating different type of terpenoids. The chain is Isoprenyl transferase from Enterococcus faecalis (strain ATCC 700802 / V583).